Consider the following 207-residue polypeptide: Zinc finger protein 487 (207 aa).

The 43-residue stretch at 1–43 folds into the KRAB domain; the sequence is MLENYSLLLSVGYCITKPEVVCKLEHGQVLWILEEESPSQSHL. The C2H2-type; atypical zinc-finger motif lies at 177–202; sequence KQCFEYNQCGKAFHEEAACSTHKRVC.

This sequence belongs to the krueppel C2H2-type zinc-finger protein family.

The protein resides in the nucleus. In terms of biological role, may be involved in transcriptional regulation. The sequence is that of Zinc finger protein 487 (ZNF487) from Homo sapiens (Human).